The sequence spans 629 residues: Glutamyl-tRNA(Gln) amidotransferase subunit E (629 aa).

Positions 405 to 426 are disordered; that stretch reads PEETRRALPDGNTQYMRPLPGK.

The protein belongs to the GatB/GatE family. GatE subfamily. As to quaternary structure, heterodimer of GatD and GatE.

The enzyme catalyses L-glutamyl-tRNA(Gln) + L-glutamine + ATP + H2O = L-glutaminyl-tRNA(Gln) + L-glutamate + ADP + phosphate + H(+). Allows the formation of correctly charged Gln-tRNA(Gln) through the transamidation of misacylated Glu-tRNA(Gln) in organisms which lack glutaminyl-tRNA synthetase. The reaction takes place in the presence of glutamine and ATP through an activated gamma-phospho-Glu-tRNA(Gln). The GatDE system is specific for glutamate and does not act on aspartate. The sequence is that of Glutamyl-tRNA(Gln) amidotransferase subunit E from Thermococcus sibiricus (strain DSM 12597 / MM 739).